Here is a 561-residue protein sequence, read N- to C-terminus: Putative transport protein YbjL (561 aa).

5 consecutive transmembrane segments (helical) span residues Leu-8–Gly-28, Leu-32–Gln-52, Phe-66–Phe-86, Met-94–Phe-114, and Asn-158–Ala-178. RCK C-terminal domains follow at residues Arg-200–Asn-288 and Val-292–Phe-373. 5 helical membrane-spanning segments follow: residues Leu-383–Phe-403, Phe-406–Leu-426, Phe-447–Gly-467, Met-475–Ala-495, and Ala-540–Leu-560.

It belongs to the AAE transporter (TC 2.A.81) family. YbjL subfamily.

Its subcellular location is the cell membrane. The sequence is that of Putative transport protein YbjL from Salmonella paratyphi C (strain RKS4594).